We begin with the raw amino-acid sequence, 72 residues long: Enterobactin biosynthesis protein YbdZ (72 aa).

Belongs to the MbtH-like family.

In terms of biological role, involved in the biosynthesis of the siderophore enterobactin (enterochelin), which is a macrocyclic trimeric lactone of N-(2,3-dihydroxybenzoyl)-serine. Plays a role in the catalytic function of EntF. It is required for adenylation of amino acids in non-ribosomal peptide biosynthesis. The sequence is that of Enterobactin biosynthesis protein YbdZ from Escherichia coli (strain K12).